Here is a 91-residue protein sequence, read N- to C-terminus: Small ribosomal subunit protein uS17 (91 aa).

Belongs to the universal ribosomal protein uS17 family. In terms of assembly, part of the 30S ribosomal subunit.

Functionally, one of the primary rRNA binding proteins, it binds specifically to the 5'-end of 16S ribosomal RNA. In Salinispora arenicola (strain CNS-205), this protein is Small ribosomal subunit protein uS17.